The chain runs to 360 residues: Type 2 DNA topoisomerase 6 subunit A (360 aa).

A Topo IIA-type catalytic domain is found at Glu3–Ala140. Residue Tyr97 is the O-(5'-phospho-DNA)-tyrosine intermediate of the active site. Residues Glu193 and Asp245 each contribute to the Mg(2+) site.

It belongs to the TOP6A family. As to quaternary structure, homodimer. Heterotetramer of two Top6A and two Top6B chains. Requires Mg(2+) as cofactor.

The catalysed reaction is ATP-dependent breakage, passage and rejoining of double-stranded DNA.. Functionally, relaxes both positive and negative superturns and exhibits a strong decatenase activity. The chain is Type 2 DNA topoisomerase 6 subunit A from Archaeoglobus fulgidus (strain ATCC 49558 / DSM 4304 / JCM 9628 / NBRC 100126 / VC-16).